Here is an 84-residue protein sequence, read N- to C-terminus: Cytochrome b559 subunit alpha (84 aa).

The chain crosses the membrane as a helical span at residues V22–W36. H24 is a binding site for heme.

This sequence belongs to the PsbE/PsbF family. As to quaternary structure, heterodimer of an alpha subunit and a beta subunit. PSII is composed of 1 copy each of membrane proteins PsbA, PsbB, PsbC, PsbD, PsbE, PsbF, PsbH, PsbI, PsbJ, PsbK, PsbL, PsbM, PsbT, PsbX, PsbY, PsbZ, Psb30/Ycf12, at least 3 peripheral proteins of the oxygen-evolving complex and a large number of cofactors. It forms dimeric complexes. Requires heme b as cofactor.

The protein resides in the plastid. It localises to the chloroplast thylakoid membrane. In terms of biological role, this b-type cytochrome is tightly associated with the reaction center of photosystem II (PSII). PSII is a light-driven water:plastoquinone oxidoreductase that uses light energy to abstract electrons from H(2)O, generating O(2) and a proton gradient subsequently used for ATP formation. It consists of a core antenna complex that captures photons, and an electron transfer chain that converts photonic excitation into a charge separation. In Gracilaria tenuistipitata var. liui (Red alga), this protein is Cytochrome b559 subunit alpha.